Reading from the N-terminus, the 300-residue chain is CDP-diacylglycerol--serine O-phosphatidyltransferase (300 aa).

The next 6 membrane-spanning stretches (helical) occupy residues 10-30 (AVNLQILPSSMTVLSICAGLT), 74-94 (IDSLADAVNFGVAPAVVLYAT), 95-115 (MLSTTPVGWVAVLLYPVCVVL), 135-155 (EFFVGMPAPAGAVSVIGLLAL), 162-182 (GWWTSTWFLCIWVTGTSMLLI), and 207-227 (LAIFAAAVVLAPYLLIWVIIL).

This sequence belongs to the CDP-alcohol phosphatidyltransferase class-I family.

Its subcellular location is the cell membrane. The catalysed reaction is a CDP-1,2-diacyl-sn-glycerol + L-serine = a 1,2-diacyl-sn-glycero-3-phospho-L-serine + CMP + H(+). This is CDP-diacylglycerol--serine O-phosphatidyltransferase (pssA) from Mycobacterium leprae (strain TN).